The sequence spans 394 residues: Elongation factor Tu (394 aa).

Residues 10–204 (KPHVNIGTIG…AVDSYIPQPI (195 aa)) form the tr-type G domain. The interval 19 to 26 (GHVDHGKT) is G1. 19–26 (GHVDHGKT) provides a ligand contact to GTP. Thr26 is a binding site for Mg(2+). Residues 60-64 (GITIS) are G2. The segment at 81–84 (DCPG) is G3. Residues 81-85 (DCPGH) and 136-139 (NKVD) contribute to the GTP site. A G4 region spans residues 136-139 (NKVD). Residues 174-176 (SAL) are G5.

Belongs to the TRAFAC class translation factor GTPase superfamily. Classic translation factor GTPase family. EF-Tu/EF-1A subfamily. In terms of assembly, monomer.

It localises to the cytoplasm. It carries out the reaction GTP + H2O = GDP + phosphate + H(+). Its function is as follows. GTP hydrolase that promotes the GTP-dependent binding of aminoacyl-tRNA to the A-site of ribosomes during protein biosynthesis. This chain is Elongation factor Tu, found in Rickettsia typhi (strain ATCC VR-144 / Wilmington).